Reading from the N-terminus, the 278-residue chain is MTFEPSETLRDPFVLYGESFGSRLLLGTARYPSPATLEAAVQASRPAMITVALRRQGAVGAGEGGQAFWQMLKALDVPVLPNTAGCFTAQEVITTAMMAREVFETPWIKLELIGDDYTLQPDTLNLPAVAETLIKEGFKVLPYCTEDLVLCRRLLDVGCQALMPWAAPIGTGRGAVNPHAMRVLRERLPDTPLIVDAGLGLPSHAAQVLEWGYDGVLLNTAVAQAAYPVNMARAFAQAVEAGRTAYLAGPMPEREVAQASTPVVGMPFWHADSTEQRA.

Lys-109 functions as the Schiff-base intermediate with DXP in the catalytic mechanism. Residues Gly-170, 197-198 (AG), and 219-220 (NT) contribute to the 1-deoxy-D-xylulose 5-phosphate site.

This sequence belongs to the ThiG family. Homotetramer. Forms heterodimers with either ThiH or ThiS.

It is found in the cytoplasm. It carries out the reaction [ThiS sulfur-carrier protein]-C-terminal-Gly-aminoethanethioate + 2-iminoacetate + 1-deoxy-D-xylulose 5-phosphate = [ThiS sulfur-carrier protein]-C-terminal Gly-Gly + 2-[(2R,5Z)-2-carboxy-4-methylthiazol-5(2H)-ylidene]ethyl phosphate + 2 H2O + H(+). The protein operates within cofactor biosynthesis; thiamine diphosphate biosynthesis. Catalyzes the rearrangement of 1-deoxy-D-xylulose 5-phosphate (DXP) to produce the thiazole phosphate moiety of thiamine. Sulfur is provided by the thiocarboxylate moiety of the carrier protein ThiS. In vitro, sulfur can be provided by H(2)S. The protein is Thiazole synthase of Cupriavidus necator (strain ATCC 17699 / DSM 428 / KCTC 22496 / NCIMB 10442 / H16 / Stanier 337) (Ralstonia eutropha).